The following is a 422-amino-acid chain: Tyrosine--tRNA ligase (422 aa).

Tyr-37 is a binding site for L-tyrosine. A 'HIGH' region motif is present at residues 42–51; sequence PTEESLHIGH. Positions 175 and 179 each coordinate L-tyrosine. Residues 235–239 carry the 'KMSKS' region motif; that stretch reads KFGKT. Residue Lys-238 coordinates ATP. An S4 RNA-binding domain is found at 357–414; the sequence is KDLQEALVLTSLAQSRTQAKNMIISNSISINTEKIRKNHIFHEKDKLFGKFTLLSRGK.

It belongs to the class-I aminoacyl-tRNA synthetase family. TyrS type 1 subfamily. Homodimer.

The protein resides in the cytoplasm. It carries out the reaction tRNA(Tyr) + L-tyrosine + ATP = L-tyrosyl-tRNA(Tyr) + AMP + diphosphate + H(+). Catalyzes the attachment of tyrosine to tRNA(Tyr) in a two-step reaction: tyrosine is first activated by ATP to form Tyr-AMP and then transferred to the acceptor end of tRNA(Tyr). The sequence is that of Tyrosine--tRNA ligase from Buchnera aphidicola subsp. Acyrthosiphon pisum (strain 5A).